A 659-amino-acid polypeptide reads, in one-letter code: Polyamine transporter 4 (659 aa).

Polar residues-rich tracts occupy residues 1-20 and 28-45; these read MPSS…NIQQ and NVTN…TGSI. A disordered region spans residues 1-81; sequence MPSSLTKTES…LDWDGPDDPD (81 aa). Topologically, residues 1 to 99 are cytoplasmic; the sequence is MPSSLTKTES…KKWYTTMTSA (99 aa). The helical transmembrane segment at 100–120 threads the bilayer; the sequence is FLCLVVTMGSSLYVSSVPELV. Residues 121–128 are Extracellular-facing; sequence ERYHVSQT. A helical transmembrane segment spans residues 129-149; it reads LALAGLTFYLLGLSTVIGAPL. The Cytoplasmic portion of the chain corresponds to 150–157; the sequence is SEVFGRKP. A helical membrane pass occupies residues 158–178; it reads VYLFSLPVSMLFTMGVGLSNG. Topologically, residues 179–187 are extracellular; sequence HMRIILPLR. A helical transmembrane segment spans residues 188–208; sequence FLSGVFASPALSVGSGTILDI. Topologically, residues 209 to 215 are cytoplasmic; that stretch reads FDVDQVS. Residues 216-236 traverse the membrane as a helical segment; the sequence is VAMTYFVLSPFLGPVLSPIMA. Residues 237–246 are Extracellular-facing; sequence GFATEAKGWR. A helical transmembrane segment spans residues 247–267; sequence WSEWIQLIAGGLILPFIALMP. The Cytoplasmic portion of the chain corresponds to 268–316; that stretch reads ETHKGIILRKRAKKRNIALKKFSREAQKEFLKTTVTITILRPLKMLVVE. A helical membrane pass occupies residues 317 to 337; sequence PIVFVFSVYVAFIFAILFGFF. At 338–355 the chain is on the extracellular side; that stretch reads EAYAVIYRGVYHMSMGIS. A helical transmembrane segment spans residues 356–376; that stretch reads GLPFIGIGVGLWIGAFFYLYI. At 377 to 423 the chain is on the cytoplasmic side; sequence DRKYLFPKPPAGTQPLTEKERTSKRTTPYRGARDAETGELLPVVPEK. The disordered stretch occupies residues 387-408; the sequence is AGTQPLTEKERTSKRTTPYRGA. A helical transmembrane segment spans residues 424-444; the sequence is FLIACKFGSVALPIGLFWQAW. Over 445-456 the chain is Extracellular; the sequence is TARSDVHWMAPV. A helical transmembrane segment spans residues 457-477; that stretch reads AAGVPFGFGLILIFFSVLMYF. Residues 478 to 486 lie on the Cytoplasmic side of the membrane; the sequence is STCYPPLTV. The chain crosses the membrane as a helical span at residues 487 to 509; the sequence is ASCLAANNLLRYVMSSVFPLFTI. Over 510-518 the chain is Extracellular; the sequence is QMYTKMKIK. The chain crosses the membrane as a helical span at residues 519 to 539; the sequence is WASTLFALVCVVMIPIPWVFE. Topologically, residues 540–659 are cytoplasmic; it reads KWGSKLRHKS…MATDASARMV (120 aa). A compositionally biased stretch (basic and acidic residues) spans 587–602; sequence METDPSTREKPGERLS. Positions 587–631 are disordered; it reads METDPSTREKPGERLSLRRTHTQPVPASFDREDGQHAQNRNEPIS. Residues Thr589, Thr606, and Thr608 each carry the phosphothreonine modification. The segment covering 622 to 631 has biased composition (polar residues); that stretch reads HAQNRNEPIS. Ser633 and Ser646 each carry phosphoserine.

The protein belongs to the major facilitator superfamily. DHA1 family. Polyamines/proton antiporter (TC 2.A.1.2.16) subfamily.

Its subcellular location is the cell membrane. Cell membrane polyamine/proton antiporter, involved in the detoxification of excess polyamines in the cytoplasm. Recognizes spermidine, spermine and the antimalarial drug quinidine, but not quinine, chloroquine and mefloquine. The protein is Polyamine transporter 4 (TPO4) of Saccharomyces cerevisiae (strain ATCC 204508 / S288c) (Baker's yeast).